We begin with the raw amino-acid sequence, 177 residues long: Small ribosomal subunit protein bS16 (177 aa).

A disordered region spans residues 80-177; it reads GIIAMPANGS…AAEAPKEEAK (98 aa). Over residues 107–122 the composition is skewed to low complexity; sequence AAPAAAPKAEAAPAAE.

This sequence belongs to the bacterial ribosomal protein bS16 family.

The chain is Small ribosomal subunit protein bS16 from Pelagibacter ubique (strain HTCC1062).